Consider the following 481-residue polypeptide: MGDVIVLYAAPGMGHIVSMVELGKLIVHRYGPHKFSITILYTCGSVVDITSISAYIRRISHSHPSISFRQFPRVTNKITRNISGAAIMFDFIRQNDPHVRRALQEISKSVAVRAFIIDLFCTSALPIGKEFNIPTYYFYTSGAAALAAFLYFPKIDEQTTESFQDLRDTVFEFPGWKSPLKAIHMVEPVLDRNDPAYSDMIYFCSQLPKSNGIIVNTFEELESSNVLQAIAGGLCVPDGPTPPVYYVGPLIDEEKELSNDAAAAEEEDCLSWLDKQPSRSVLFLCFGSRGSFPAVQLKEIANGLEASGQRFLWVVKKPPVEEKTKQVHGVDDFDLKGVLPEGFLERTADRGMVVKSWAPQVVVLKKESVGGFVTHCGWNSVLEAVVAGVPMIAWPLYAEQHMNRNVLVTDMEIAIGVEQRDEEDGFVSGEEVERRVRELMESEGGRVLRERCKKIGEMALAALGETGSSTRNFVNFVSSIT.

Residues Ser288, 357–358 (WA), 375–383 (HCGWNSVLE), and 397–400 (YAEQ) each bind UDP-alpha-D-glucose.

Belongs to the UDP-glycosyltransferase family.

Its function is as follows. Glycosyltransferase that may possess chalcone and dihydrochalcone 2'-O-glucosyltransferase activity. The sequence is that of UDP-glycosyltransferase 88F4 from Malus domestica (Apple).